We begin with the raw amino-acid sequence, 525 residues long: MSEYLQQIAKRRTFAIISHPDAGKTTITEKMLLFGNAIKTAGTVKAKKSGIHATSDWMEMEKQRGISITTSVMQFPYNGRIINLLDTPGHEDFSEDTYRTLTAVDSALMVVDAVKGVEDRTIKLMNVCRLRDTPIVTFMNKFDRDTRDPLELLDEVENILKIKCAPMNWPIGMGKYFKGVYDLYNDEVTLFETGHGHEIYPYKKIKGLANAKDSIGIDLYEDLEMEIDLVRGASHEFDEQEFLEGNLTPVYFGTALSNFGVKEMMDGFTRYAPAPQHREADQRVVAADEQKLTGFVFKIQANMDEKHRNRIAFFRICSGKYEKGMKIFHERTGKQMQISKALTFMAGEREQVEEGYAGDIIGLHNHGSIQIGDSFTQGEKLKFKGIPNFAPEIFKRVKLNDPLKMKALQKGLVQLSEEGATQVFKPFISNDLVLGAVGVLQFDVVAQRLASEYNVKCSYEGVNVTLARWIFCNDEKKLNDFKKKYEVNLAYDGAGYLTYLAPTGVNLQLAQEKNPDIIFSATREH.

The tr-type G domain occupies 9–276 (AKRRTFAIIS…GFTRYAPAPQ (268 aa)). Residues 18–25 (SHPDAGKT), 86–90 (DTPGH), and 140–143 (NKFD) contribute to the GTP site.

It belongs to the TRAFAC class translation factor GTPase superfamily. Classic translation factor GTPase family. PrfC subfamily.

The protein resides in the cytoplasm. In terms of biological role, increases the formation of ribosomal termination complexes and stimulates activities of RF-1 and RF-2. It binds guanine nucleotides and has strong preference for UGA stop codons. It may interact directly with the ribosome. The stimulation of RF-1 and RF-2 is significantly reduced by GTP and GDP, but not by GMP. This Francisella tularensis subsp. holarctica (strain FTNF002-00 / FTA) protein is Peptide chain release factor 3.